The following is a 221-amino-acid chain: Transcription factor bHLH126 (221 aa).

Disordered regions lie at residues 1–46 (MDPY…KKLL) and 104–132 (RRDE…VGKS). The bHLH domain occupies 42–94 (KKKLLHRDIERQRRQEMATLFATLRTHLPLKYIKGKRAVSDHVNGAVNFIKDT).

In terms of assembly, homodimer.

Its subcellular location is the nucleus. The chain is Transcription factor bHLH126 (BHLH126) from Arabidopsis thaliana (Mouse-ear cress).